We begin with the raw amino-acid sequence, 200 residues long: Putative vacuolar protein sorting-associated protein 24 homolog 2 (200 aa).

Residues Thr2–Asp23 are a coiled coil.

This sequence belongs to the SNF7 family. As to quaternary structure, component of the endosomal sorting required for transport complex III (ESCRT-III), composed at least of VPS2, VPS20, VPS24 and VPS32.

The protein localises to the endosome. Functionally, component of the ESCRT-III complex, which is required for multivesicular bodies (MVBs) formation and sorting of endosomal cargo proteins into MVBs. The ESCRT-III complex is probably involved in the concentration of MVB cargo. This is Putative vacuolar protein sorting-associated protein 24 homolog 2 (VPS24-2) from Arabidopsis thaliana (Mouse-ear cress).